Reading from the N-terminus, the 480-residue chain is Siroheme synthase 1 (480 aa).

Positions 1–203 are precorrin-2 dehydrogenase /sirohydrochlorin ferrochelatase; that stretch reads MNYLPIFADL…GQLEQAEGEL (203 aa). Residues 22-23 and 43-44 contribute to the NAD(+) site; these read EV and LA. Ser128 bears the Phosphoserine mark. Residues 222–480 are uroporphyrinogen-III C-methyltransferase; that stretch reads GEVALVGAGP…DSRPAVVNLA (259 aa). Pro231 is a binding site for S-adenosyl-L-methionine. Residue Asp254 is the Proton acceptor of the active site. Lys276 serves as the catalytic Proton donor. S-adenosyl-L-methionine contacts are provided by residues 307–309, Ile312, 337–338, Met389, and Gly418; these read GGD and TA.

This sequence in the N-terminal section; belongs to the precorrin-2 dehydrogenase / sirohydrochlorin ferrochelatase family. The protein in the C-terminal section; belongs to the precorrin methyltransferase family.

It catalyses the reaction uroporphyrinogen III + 2 S-adenosyl-L-methionine = precorrin-2 + 2 S-adenosyl-L-homocysteine + H(+). It carries out the reaction precorrin-2 + NAD(+) = sirohydrochlorin + NADH + 2 H(+). The catalysed reaction is siroheme + 2 H(+) = sirohydrochlorin + Fe(2+). It functions in the pathway cofactor biosynthesis; adenosylcobalamin biosynthesis; precorrin-2 from uroporphyrinogen III: step 1/1. The protein operates within cofactor biosynthesis; adenosylcobalamin biosynthesis; sirohydrochlorin from precorrin-2: step 1/1. Its pathway is porphyrin-containing compound metabolism; siroheme biosynthesis; precorrin-2 from uroporphyrinogen III: step 1/1. It participates in porphyrin-containing compound metabolism; siroheme biosynthesis; siroheme from sirohydrochlorin: step 1/1. It functions in the pathway porphyrin-containing compound metabolism; siroheme biosynthesis; sirohydrochlorin from precorrin-2: step 1/1. Functionally, multifunctional enzyme that catalyzes the SAM-dependent methylations of uroporphyrinogen III at position C-2 and C-7 to form precorrin-2 via precorrin-1. Then it catalyzes the NAD-dependent ring dehydrogenation of precorrin-2 to yield sirohydrochlorin. Finally, it catalyzes the ferrochelation of sirohydrochlorin to yield siroheme. The protein is Siroheme synthase 1 of Pectobacterium atrosepticum (strain SCRI 1043 / ATCC BAA-672) (Erwinia carotovora subsp. atroseptica).